The primary structure comprises 95 residues: Sec-independent protein translocase protein TatA (95 aa).

The chain crosses the membrane as a helical span at residues 1-21 (MGSMSVWHWVIVAVVVMLLFG). A disordered region spans residues 42-95 (GMADDETQPNTATSVPPVGPNDPVRTLPHQGAPGTAPQPPHVQPHVSAGDHKAV).

This sequence belongs to the TatA/E family. As to quaternary structure, the Tat system comprises two distinct complexes: a TatABC complex, containing multiple copies of TatA, TatB and TatC subunits, and a separate TatA complex, containing only TatA subunits. Substrates initially bind to the TatABC complex, which probably triggers association of the separate TatA complex to form the active translocon.

The protein localises to the cell inner membrane. Part of the twin-arginine translocation (Tat) system that transports large folded proteins containing a characteristic twin-arginine motif in their signal peptide across membranes. TatA could form the protein-conducting channel of the Tat system. In Methylorubrum extorquens (strain CM4 / NCIMB 13688) (Methylobacterium extorquens), this protein is Sec-independent protein translocase protein TatA.